The chain runs to 272 residues: Endogenous Bornavirus-like nucleoprotein 2 (272 aa).

The tract at residues 48–70 (MSHLRKDSQPSSPGDDAMDRSGL) is disordered.

Functionally, may act as an RNA-binding protein. The C-terminal region is highly homologous to the bornavirus nucleocapsid N protein that binds viral RNA and oligomerizes. The viral protein also possesses a nuclear import and a nuclear export signal. These 2 signals seem absent in EBLN-2 supporting an unrelated function in Human. This chain is Endogenous Bornavirus-like nucleoprotein 2 (EBLN2), found in Homo sapiens (Human).